A 286-amino-acid chain; its full sequence is MNAYQKTIGRAVTLSGVGIHGGAPASARLLPADADTGILFQRSDIKDSAPVCAHVSQIGATDLCTSLGAREARIDTVEHLMAAISALGIDNLVVEIEGPEVPILDGTSARFIEAVDSVGVVTQDAKRRFIRILKTVRVEAGNSWGEFRPYDGTRFEVEIDFECPLIGRQKFAHDVDEETFRKELSTARTFGFMKDVERLWAAGLALGASLDNSLVIGDDNSIVNADGLRFKDEFVRHKTLDAVGDLALAGLPFIGCFSSYRGGHRLNSEAVKALLSDETAFEIIEA.

Residues H79, H237, and D241 each contribute to the Zn(2+) site. The Proton donor role is filled by H264.

It belongs to the LpxC family. Zn(2+) is required as a cofactor.

It carries out the reaction a UDP-3-O-[(3R)-3-hydroxyacyl]-N-acetyl-alpha-D-glucosamine + H2O = a UDP-3-O-[(3R)-3-hydroxyacyl]-alpha-D-glucosamine + acetate. Its pathway is glycolipid biosynthesis; lipid IV(A) biosynthesis; lipid IV(A) from (3R)-3-hydroxytetradecanoyl-[acyl-carrier-protein] and UDP-N-acetyl-alpha-D-glucosamine: step 2/6. Functionally, catalyzes the hydrolysis of UDP-3-O-myristoyl-N-acetylglucosamine to form UDP-3-O-myristoylglucosamine and acetate, the committed step in lipid A biosynthesis. The polypeptide is UDP-3-O-acyl-N-acetylglucosamine deacetylase (Brucella melitensis biotype 2 (strain ATCC 23457)).